The primary structure comprises 705 residues: Cell cycle serine/threonine-protein kinase CDC5/MSD2 (705 aa).

Thr23 bears the Phosphothreonine mark. A compositionally biased stretch (basic and acidic residues) spans 41–53 (QTKRLDPNNDHHH). Residues 41–63 (QTKRLDPNNDHHHQPAQKKKREK) are disordered. The region spanning 82-337 (YHRGHFLGEG…LTEIMDYVWF (256 aa)) is the Protein kinase domain. ATP-binding positions include 88 to 96 (LGEGGFARC) and Lys110. Catalysis depends on Asp204, which acts as the Proton acceptor. Ser419 is subject to Phosphoserine. One can recognise a POLO box 1 domain in the interval 513 to 595 (IVTKWVDYSN…VDFFAKYMKA (83 aa)). Glu553, His569, His609, and Asp612 together coordinate Zn(2+). The 87-residue stretch at 614–700 (FLRRYTRYKP…IKEGLKQKST (87 aa)) folds into the POLO box 2 domain.

This sequence belongs to the protein kinase superfamily. Ser/Thr protein kinase family. CDC5/Polo subfamily. Interacts with CDC48; the interaction is likely to result in CDC5 degradation. Interacts with CSA1.

It is found in the cytoplasm. The protein localises to the cytoskeleton. It localises to the microtubule organizing center. Its subcellular location is the spindle pole body. It catalyses the reaction L-seryl-[protein] + ATP = O-phospho-L-seryl-[protein] + ADP + H(+). It carries out the reaction L-threonyl-[protein] + ATP = O-phospho-L-threonyl-[protein] + ADP + H(+). Its function is as follows. Protein kinase required for the cell cycle where it is involved in mitotic exit. A component of the fear (CDC14 early anaphase release) network which promotes CDC14 release from the nucleolus during early anaphase. Phosphorylates SCC1/MCD1 and NET1. The chain is Cell cycle serine/threonine-protein kinase CDC5/MSD2 (CDC5) from Saccharomyces cerevisiae (strain ATCC 204508 / S288c) (Baker's yeast).